The chain runs to 246 residues: Bis(5'-nucleosyl)-tetraphosphatase PrpE [asymmetrical] (246 aa).

Belongs to the PrpE family. Ni(2+) serves as cofactor.

It catalyses the reaction P(1),P(4)-bis(5'-guanosyl) tetraphosphate + H2O = GMP + GTP + 2 H(+). In terms of biological role, asymmetrically hydrolyzes Ap4p to yield AMP and ATP. This Bacillus cereus (strain 03BB102) protein is Bis(5'-nucleosyl)-tetraphosphatase PrpE [asymmetrical].